We begin with the raw amino-acid sequence, 296 residues long: Probable xyloglucan endotransglucosylase/hydrolase 1 (296 aa).

The first 22 residues, 1-22 (MGIIKGVLFSIVLINLSLVVFC), serve as a signal peptide directing secretion. The GH16 domain maps to 23-221 (GYPRRPVDVP…WANAPFTASY (199 aa)). Glu-107 functions as the Nucleophile in the catalytic mechanism. Glu-111 (proton donor) is an active-site residue. Position 111 (Glu-111) interacts with xyloglucan. Residue Asn-115 is glycosylated (N-linked (GlcNAc...) asparagine). Xyloglucan contacts are provided by residues 124–126 (QTN), 134–136 (NRE), 200–201 (DW), and Gly-205. 2 cysteine pairs are disulfide-bonded: Cys-229-Cys-240 and Cys-277-Cys-290. Arg-282 provides a ligand contact to xyloglucan.

Belongs to the glycosyl hydrolase 16 family. XTH group 1 subfamily. In terms of processing, contains at least one intrachain disulfide bond essential for its enzymatic activity.

The protein resides in the secreted. Its subcellular location is the cell wall. It localises to the extracellular space. The protein localises to the apoplast. The enzyme catalyses breaks a beta-(1-&gt;4) bond in the backbone of a xyloglucan and transfers the xyloglucanyl segment on to O-4 of the non-reducing terminal glucose residue of an acceptor, which can be a xyloglucan or an oligosaccharide of xyloglucan.. Functionally, catalyzes xyloglucan endohydrolysis (XEH) and/or endotransglycosylation (XET). Cleaves and religates xyloglucan polymers, an essential constituent of the primary cell wall, and thereby participates in cell wall construction of growing tissues. The chain is Probable xyloglucan endotransglucosylase/hydrolase 1 (XTH1) from Solanum lycopersicum (Tomato).